Consider the following 146-residue polypeptide: Probable flagellum biosynthesis repressor protein FlbT 1 (146 aa).

Belongs to the FlbT family.

Has a post-transcriptional repressor function in flagellum biogenesis. Associates with the 5'-UTR of fljK mRNA and promotes its degradation. The polypeptide is Probable flagellum biosynthesis repressor protein FlbT 1 (Bradyrhizobium diazoefficiens (strain JCM 10833 / BCRC 13528 / IAM 13628 / NBRC 14792 / USDA 110)).